The sequence spans 177 residues: Large ribosomal subunit protein uL5 (177 aa).

The protein belongs to the universal ribosomal protein uL5 family. Part of the 50S ribosomal subunit; part of the 5S rRNA/L5/L18/L25 subcomplex. Contacts the 5S rRNA and the P site tRNA. Forms a bridge to the 30S subunit in the 70S ribosome.

Its function is as follows. This is one of the proteins that bind and probably mediate the attachment of the 5S RNA into the large ribosomal subunit, where it forms part of the central protuberance. In the 70S ribosome it contacts protein S13 of the 30S subunit (bridge B1b), connecting the 2 subunits; this bridge is implicated in subunit movement. Contacts the P site tRNA; the 5S rRNA and some of its associated proteins might help stabilize positioning of ribosome-bound tRNAs. In Ehrlichia canis (strain Jake), this protein is Large ribosomal subunit protein uL5.